Consider the following 371-residue polypeptide: Putative glutamate--cysteine ligase 2 (371 aa).

Belongs to the glutamate--cysteine ligase type 2 family. YbdK subfamily.

The catalysed reaction is L-cysteine + L-glutamate + ATP = gamma-L-glutamyl-L-cysteine + ADP + phosphate + H(+). Its function is as follows. ATP-dependent carboxylate-amine ligase which exhibits weak glutamate--cysteine ligase activity. The sequence is that of Putative glutamate--cysteine ligase 2 from Burkholderia lata (strain ATCC 17760 / DSM 23089 / LMG 22485 / NCIMB 9086 / R18194 / 383).